A 113-amino-acid chain; its full sequence is Vitelline membrane protein Vm32E (113 aa).

Positions 1 to 17 (MKIVAFTLVAFVALAGA) are cleaved as a signal peptide. The VM domain maps to 33–70 (GYPAPPCPTNYLFSCQPNLAPVPCAQQAPAYGSAGAYT).

This sequence belongs to the vitelline membrane family.

Its subcellular location is the secreted. Functionally, major early eggshell protein. The sequence is that of Vitelline membrane protein Vm32E from Drosophila erecta (Fruit fly).